The chain runs to 251 residues: Ferritin-1, chloroplastic (251 aa).

Residues 1 to 45 constitute a chloroplast transit peptide; sequence MLLKAAPAFALLNTQGENLSPLFSSSKSFSPKNGNRFVVSASKAT. The tract at residues 46-78 is extension peptide (EP); it reads NHKPLTGVVFEPFEELKKELMLVPAVPDTSLCR. One can recognise a Ferritin-like diiron domain in the interval 79–232; that stretch reads QKYSDDCEAA…EYVAQLRRVG (154 aa). Fe cation is bound by residues Glu96, Glu131, His134, Glu180, and Gln214.

Belongs to the ferritin family. Oligomer of 24 subunits. There are two types of subunits: L (light) chain and H (heavy) chain. The major chain can be light or heavy, depending on the species and tissue type. The functional molecule forms a roughly spherical shell with a diameter of 12 nm and contains a central cavity into which the insoluble mineral iron core is deposited.

It localises to the plastid. It is found in the chloroplast. It carries out the reaction 4 Fe(2+) + O2 + 4 H(+) = 4 Fe(3+) + 2 H2O. Functionally, stores iron in a soluble, non-toxic, readily available form. Important for iron homeostasis. Has ferroxidase activity. Iron is taken up in the ferrous form and deposited as ferric hydroxides after oxidation. The polypeptide is Ferritin-1, chloroplastic (FER1) (Nicotiana tabacum (Common tobacco)).